The following is a 427-amino-acid chain: Serine--tRNA ligase (427 aa).

229 to 231 (TAE) lines the L-serine pocket. 260 to 262 (RSE) contacts ATP. E283 is a binding site for L-serine. 347-350 (EISS) serves as a coordination point for ATP. S383 provides a ligand contact to L-serine.

This sequence belongs to the class-II aminoacyl-tRNA synthetase family. Type-1 seryl-tRNA synthetase subfamily. Homodimer. The tRNA molecule binds across the dimer.

It is found in the cytoplasm. The catalysed reaction is tRNA(Ser) + L-serine + ATP = L-seryl-tRNA(Ser) + AMP + diphosphate + H(+). It carries out the reaction tRNA(Sec) + L-serine + ATP = L-seryl-tRNA(Sec) + AMP + diphosphate + H(+). Its pathway is aminoacyl-tRNA biosynthesis; selenocysteinyl-tRNA(Sec) biosynthesis; L-seryl-tRNA(Sec) from L-serine and tRNA(Sec): step 1/1. Catalyzes the attachment of serine to tRNA(Ser). Is also able to aminoacylate tRNA(Sec) with serine, to form the misacylated tRNA L-seryl-tRNA(Sec), which will be further converted into selenocysteinyl-tRNA(Sec). In Oleidesulfovibrio alaskensis (strain ATCC BAA-1058 / DSM 17464 / G20) (Desulfovibrio alaskensis), this protein is Serine--tRNA ligase.